A 633-amino-acid polypeptide reads, in one-letter code: E3 ubiquitin-protein ligase ZSWIM2 (633 aa).

The SWIM-type zinc-finger motif lies at 54 to 87; sequence FRVFLGNPHVCNCSTFPKGGELCKHICWVLLKKF. The segment at 147 to 198 adopts an RING-type 1 zinc-finger fold; sequence CSICQELLLEKKLPVTFCRFGCGNSIHIKCMKILANYQSTSNTSMLKCPLCR. The segment at 229–280 adopts a ZZ-type zinc-finger fold; the sequence is HLGIPCNNCKQFPIEGKCYKCTECIEYHLCQECFDSCCHLSHTFTFREKRNQ. Zn(2+) contacts are provided by Cys234, Cys237, Cys249, Cys252, Cys258, Cys261, His267, and His270. The RING-type 2 zinc finger occupies 344 to 388; sequence CLLCLKAFHLGQHTRLLPCTHKFHRKCIDNWLFHKCNSCPIDGQV.

In terms of assembly, dimer. Interacts with UBE2D1. Post-translationally, polyubiquitinated. Polyubiquitination is followed by degradation via the proteasome. As to expression, expression is testis-specific.

It catalyses the reaction S-ubiquitinyl-[E2 ubiquitin-conjugating enzyme]-L-cysteine + [acceptor protein]-L-lysine = [E2 ubiquitin-conjugating enzyme]-L-cysteine + N(6)-ubiquitinyl-[acceptor protein]-L-lysine.. E3 ubiquitin-protein ligase involved in the regulation of Fas-, DR3- and DR4-mediated apoptosis. Functions in conjunction with the UBE2D1, UBE2D3 and UBE2E1 E2 ubiquitin-conjugating enzymes. This is E3 ubiquitin-protein ligase ZSWIM2 from Homo sapiens (Human).